The following is a 510-amino-acid chain: NAD(P)H-quinone oxidoreductase subunit 2 B, chloroplastic (510 aa).

13 helical membrane-spanning segments follow: residues 24–44 (LLLF…GLIL), 57–77 (IPWL…ALLF), 99–119 (IFQF…VEYI), 124–144 (MAIT…MFLC), 149–169 (LITI…LSGY), 183–203 (YLLM…WLYG), 227–247 (PGIS…LSPA), 295–315 (WHLL…LIAI), 323–343 (MLAY…IVGD), 354–374 (YMLF…LFGL), 395–415 (ALSL…AGFF), 418–438 (LYLF…IGLL), and 484–504 (MIVC…IIAI).

This sequence belongs to the complex I subunit 2 family. As to quaternary structure, NDH is composed of at least 16 different subunits, 5 of which are encoded in the nucleus.

It is found in the plastid. The protein resides in the chloroplast thylakoid membrane. The enzyme catalyses a plastoquinone + NADH + (n+1) H(+)(in) = a plastoquinol + NAD(+) + n H(+)(out). It carries out the reaction a plastoquinone + NADPH + (n+1) H(+)(in) = a plastoquinol + NADP(+) + n H(+)(out). In terms of biological role, NDH shuttles electrons from NAD(P)H:plastoquinone, via FMN and iron-sulfur (Fe-S) centers, to quinones in the photosynthetic chain and possibly in a chloroplast respiratory chain. The immediate electron acceptor for the enzyme in this species is believed to be plastoquinone. Couples the redox reaction to proton translocation, and thus conserves the redox energy in a proton gradient. The sequence is that of NAD(P)H-quinone oxidoreductase subunit 2 B, chloroplastic from Daucus carota (Wild carrot).